A 436-amino-acid polypeptide reads, in one-letter code: FAD-dependent monooxygenase pigN (436 aa).

FAD-binding residues include Glu40, Gly53, and Arg118. Arg200 is an active-site residue. 2 residues coordinate FAD: Asp316 and Ala329.

Belongs to the paxM FAD-dependent monooxygenase family. FAD is required as a cofactor.

The protein operates within secondary metabolite biosynthesis. In terms of biological role, FAD-dependent monooxygenase; part of the gene cluster that mediates the biosynthesis of azaphilone pigments (MonAzPs), a complex mixture of compounds with a common azaphilone skeleton very widely used as food colorants. Within the pathway, pigN hydroxylates the benzaldehyde M7PKS-1 intermediate at C-4 to form the pyran ring. The first step of the pathway is performed by the nrPKS pigA that forms the hexaketide precursor from successive condensations of five malonyl-CoA units, with a simple acetyl-CoA starter unit. The role of esterase pigG is not clear, but it may play at most a supplementary role in the formation of the benzaldehyde produced by the pigA nrPKS. This very reactive benzaldehyde is intercepted by the pigC ketoreductase that to provide the first stable enzyme-free MonAzPs intermediate, 6-(4-hydroxy-2-oxopentyl)-3-methyl-2,4-dioxocyclohexane carbaldehyde, also known as M7PKS-1. The FAD-dependent monooxygenase pigN hydroxylates M7PKS-1 at C-4, which triggers the formation of the pyran ring. PigJ, pigK and pigD are involved in the acetylation of the pyran ring. PigJ and pigK form the two subunits of a dedicated fungal FAS that produces the side chain fatty acyl moiety of MonAzPs and pigD transfers the fatty acyl chain to the C-4 alcohol. PigM and pigO are involved in the elimination of the omega-1 alcohol. PigM acts as an O-acetyltransferase that synthesizes the putative O-11 acetyl intermediate whereas pigO eliminates acetic acid to yield an intermediate with a C10(11) double bond. The dehydration of the C-11 alcohol followed by the reduction of the C6(7) double bond by the NAD(P)H-dependent oxidoreductase pigE increases the electrophilicity of the C-5 ketone of the resulting acyl benzopyran. This in turn sets up the C-5 ketone for an intramolecular Knoevenagel aldol condensation with the C-20 enol of the side chain. This condensation affords the characteristic linear tricyclic carbon skeletons of the yellow pigments that serve as the common precursors for the classical yellow pigments monascin and ankaflavin, orange pigments rubopunctatin and monascorubrin, and red pigments ribropunctamine and monascorubramine. The FAD-dependent oxidoreductase pigF is especially invoved in the biosynthesis of orange and red pigments via desaturation of C6(7). The chain is FAD-dependent monooxygenase pigN from Monascus ruber (Mold).